The chain runs to 410 residues: Dipeptidase 1 (410 aa).

The first 16 residues, Met-1–Ser-16, serve as a signal peptide directing secretion. Zn(2+)-binding residues include His-36 and Asp-38. A disulfide bridge connects residues Cys-87 and Cys-170. Asn-121 is a glycosylation site (N-linked (GlcNAc...) asparagine). A Zn(2+)-binding site is contributed by Glu-141. His-168 serves as a coordination point for substrate. His-214 and His-235 together coordinate Zn(2+). Cys-242 and Cys-274 are joined by a disulfide. Arg-246 contacts substrate. N-linked (GlcNAc...) asparagine glycosylation occurs at Asn-258. Substrate is bound at residue Asp-304. N-linked (GlcNAc...) asparagine glycosylation occurs at Asn-332. Residue Ser-384 is the site of GPI-anchor amidated serine attachment. A propeptide spans Gln-385 to Leu-410 (removed in mature form).

Belongs to the metallo-dependent hydrolases superfamily. Peptidase M19 family. As to quaternary structure, homodimer; disulfide-linked. Zn(2+) serves as cofactor. Expressed in heart, lung, skeletal muscle, kidney, liver, and testis. Not detected in brain and spleen.

The protein localises to the apical cell membrane. Its subcellular location is the cell projection. It is found in the microvillus membrane. The enzyme catalyses an L-aminoacyl-L-amino acid + H2O = 2 an L-alpha-amino acid. It carries out the reaction leukotriene D4 + H2O = leukotriene E4 + glycine. The catalysed reaction is L-cystine-bis-glycine + 2 H2O = L-cystine + 2 glycine. It catalyses the reaction a beta-lactam + H2O = a substituted beta-amino acid. The enzyme catalyses glycyldehydrophenylalanine + H2O = 2,3-didehydrophenylalanine + glycine. Its activity is regulated as follows. Inhibited by L-penicillamine. Inhibited by cilastatin. In terms of biological role, hydrolyzes a wide range of dipeptides including the conversion of leukotriene D4 to leukotriene E4. Hydrolyzes cystinyl-bis-glycine (cys-bis-gly) formed during glutathione degradation. Also possesses beta lactamase activity and hydrolytically inactivates beta-lactam antibiotics. Functionally, independently of its dipeptidase activity, acts as an adhesion receptor for neutrophil recruitment from bloodstream into inflamed lungs and liver. This chain is Dipeptidase 1 (Dpep1), found in Mus musculus (Mouse).